Reading from the N-terminus, the 473-residue chain is Pup--protein ligase (473 aa).

A Mg(2+)-binding site is contributed by E9. Residue R54 participates in ATP binding. Residue Y56 coordinates Mg(2+). D58 acts as the Proton acceptor in catalysis. Mg(2+) is bound at residue E64. Residues T67 and W425 each contribute to the ATP site.

The protein belongs to the Pup ligase/Pup deamidase family. Pup-conjugating enzyme subfamily.

It catalyses the reaction ATP + [prokaryotic ubiquitin-like protein]-L-glutamate + [protein]-L-lysine = ADP + phosphate + N(6)-([prokaryotic ubiquitin-like protein]-gamma-L-glutamyl)-[protein]-L-lysine.. Its pathway is protein degradation; proteasomal Pup-dependent pathway. The protein operates within protein modification; protein pupylation. Functionally, catalyzes the covalent attachment of the prokaryotic ubiquitin-like protein modifier Pup to the proteasomal substrate proteins, thereby targeting them for proteasomal degradation. This tagging system is termed pupylation. The ligation reaction involves the side-chain carboxylate of the C-terminal glutamate of Pup and the side-chain amino group of a substrate lysine. This Brachybacterium faecium (strain ATCC 43885 / DSM 4810 / JCM 11609 / LMG 19847 / NBRC 14762 / NCIMB 9860 / 6-10) protein is Pup--protein ligase.